The following is a 120-amino-acid chain: Large ribosomal subunit protein bL20c (120 aa).

This sequence belongs to the bacterial ribosomal protein bL20 family.

The protein resides in the plastid. Binds directly to 23S ribosomal RNA and is necessary for the in vitro assembly process of the 50S ribosomal subunit. It is not involved in the protein synthesizing functions of that subunit. The protein is Large ribosomal subunit protein bL20c of Cuscuta obtusiflora (Peruvian dodder).